Here is a 270-residue protein sequence, read N- to C-terminus: Monocyte to macrophage differentiation factor 2 (270 aa).

Topologically, residues 1-38 are cytoplasmic; it reads MFAPRLLDFQKTKYARFMNHRVPAHKRYQPTEYEHAAN. A helical membrane pass occupies residues 39 to 59; the sequence is CATHAFWIIPSILGSSNLYFL. The Lumenal segment spans residues 60-65; the sequence is SDDDWE. Residues 66-86 form a helical membrane-spanning segment; the sequence is TISAWIYGLGLCGLFVVSTVF. The Cytoplasmic segment spans residues 87 to 102; the sequence is HTISWKKSHLRMVEHC. Residues 103–123 traverse the membrane as a helical segment; sequence LHMFDRMVIYFFIAASYAPWL. Residues 124 to 132 are Lumenal-facing; the sequence is NLRELGPWA. The chain crosses the membrane as a helical span at residues 133 to 153; that stretch reads SHMRWLVWIMASVGTIYVFFF. The Cytoplasmic segment spans residues 154–182; it reads HERTGSCVQFLRGEACPKAGTACLPARYK. Residues 183-203 traverse the membrane as a helical segment; that stretch reads LVELLCYVVMGFFPALVILSM. Residues 204–205 lie on the Lumenal side of the membrane; the sequence is PN. The helical transmembrane segment at 206-226 threads the bilayer; the sequence is TEGIWELVTGGVFYCLGMVFF. Residues 227–233 are Cytoplasmic-facing; sequence KSDGRIP. Residues 234 to 254 traverse the membrane as a helical segment; sequence FAHAIWHLFVAFGAGTHYYAI. Over 255 to 270 the chain is Lumenal; it reads WRYLYLPSTLQTKVSK.

The protein belongs to the ADIPOR family. Shows restricted expression with highest levels in brain and testis.

The protein resides in the golgi apparatus membrane. This chain is Monocyte to macrophage differentiation factor 2, found in Homo sapiens (Human).